Reading from the N-terminus, the 395-residue chain is MRGALLLLVLLSAQHVSTSQFWLSVEVEQIDWTDGCLTTALCSHPRFQLIKDLLPVNEKVTMNWPIVEHFDKESHRPFVSYWPSGRTEDISMSAQVVGTDRTYGFPRICDQSPSVRIFPEEHKKIVAHLEKEKPTGKPPMDSLKIKVKGKCFNATMTVIKHTERCPWCPDPKEITIIGQEPGSEATGLRAGSAAWLFGSSSSLISDDRIVHIGVLVLAIVAVLSSTAFAIILVMYLRNKRLVKETLKKPRFHPYISVKGHEIAEDNCRYDLPWEQQQRPLTYWMTSSNKSSESTMTSPLDSASSLHGSGGSHQNPHMYNSHHHQHQQQQNAHPSEMYHSTYTRDGYQTYRPPPPSVHPPIFPPQTQLFHPPTYSTQRHVTSPNSSRNDDSGLESV.

Positions 286–306 are enriched in low complexity; that stretch reads SSNKSSESTMTSPLDSASSLH. Residues 286 to 395 form a disordered region; the sequence is SSNKSSESTM…RNDDSGLESV (110 aa). A compositionally biased stretch (pro residues) spans 350-362; that stretch reads RPPPPSVHPPIFP. The segment covering 364 to 385 has biased composition (polar residues); the sequence is QTQLFHPPTYSTQRHVTSPNSS.

This is an uncharacterized protein from Caenorhabditis elegans.